The sequence spans 161 residues: Dihydrofolate reductase type 1 from Tn4003 (161 aa).

Residues 2-157 (TLSIIVAHDK…IPHTFLHLVR (156 aa)) form the DHFR domain. 6–8 (IVA) is a binding site for substrate. NADP(+) contacts are provided by residues 7–8 (VA) and 15–20 (IGYQNQ). D28 contacts substrate. 44-47 (ARKT) provides a ligand contact to NADP(+). Substrate is bound at residue R58. NADP(+) is bound by residues 63–66 (LTNQ) and 93–98 (FGGQTL). T112 contacts substrate.

This sequence belongs to the dihydrofolate reductase family.

It catalyses the reaction (6S)-5,6,7,8-tetrahydrofolate + NADP(+) = 7,8-dihydrofolate + NADPH + H(+). It participates in cofactor biosynthesis; tetrahydrofolate biosynthesis; 5,6,7,8-tetrahydrofolate from 7,8-dihydrofolate: step 1/1. In terms of biological role, key enzyme in folate metabolism. Catalyzes an essential reaction for de novo glycine and purine synthesis, and for DNA precursor synthesis. In Staphylococcus aureus, this protein is Dihydrofolate reductase type 1 from Tn4003 (dfrA).